A 5900-amino-acid chain; its full sequence is MYKFKFNIFKAIKALELELTKIKNESSSSTIIQDFKSFEQIFKKKENEFTSQDKLFIVEEISNLLMSKPEYPSLISNIFSPLLVDLVSRYIQNGKKEERWLGLVQSCFRLLSFNKSLFSSLWDWTPLFSLLEIKSQRITWYVIKSMSMVLNVPDHQITQIKPLFKQYHNQIIQIESELLNLESSKLFLNNNNNNNNKKENINNNQEEEKEDEELINKYPNIFIQKQDLHKSIVDVCGILLFKKFEQIGHGSSVKSKKGGEQQQEGEGEDEQVQKLVYTNTVSQNLNSLAIAVGLGKPILIEGVTGSGKTTMIEELSRITGNDNIIRIHLGDQTDSKVLLGTYITSDTPGEFKWQAGALTQAVQEGRWILIEDIDLAPIEVLSVLIPLLENRTLFIPGRGEVIEASNGFQLFATQTLFGSHSRDQNANILSHLWTRVVIEALSPTEMKQVLLTLFPQLTVMISKFIETFNLLLRVISNQSISISPTDEVAGIANIANTANVNNINNNNNTDNNNNNNSNEKFIIPSSRFISSRDLIKWIRRCNQRLHLTNVSQQIITSTMQEIVFVEALDCFCSMISKKNLRKQLTQVIGRVWELTGDRINYYVELYKPSIIITQESVSTGRAKLKSLEKSDSIQISNGKKHTRFTTEQSQQDSGVTKHGNVFAHTMNSLRLMEKISISIQFNEPILLVGETGTGKTSVVQYIADQLNQKLVVLNLNQQSDSSDLIGGFKPVEMRLLCLPLKNRFDSMFKKTFSESNNTDFLEKIDKAFISKNWKQFIALLNKAIKLVENKVLKDDQTTTNNTKENNNNNNNNNNNNNNNNNNKKRTIRSEVKEKWIKLSNDIKKLTIQFEKSKNNFAFSFVEGSLVNCIRKGYWVLLDEMNLATSETLESLSGLFDGGSITLTEKGEVEPVERHPNFKVFACMNPPTDIGKKDLPPGIRNRFTEYYVDDLDNRGDLCLVVKTVLSNLVPNPPIEDIVEFYLKTKQDAQNKMLDGSNQKPIFSLRTLSRALNYTKHVTKSFGFQRALFEGISMSFLTQLNKSSYPMMEQLIKQYIKKGEVKLYNQPLNRPPPTSTTNNNNNNAEESYVKIEQFWIECGNEKPIIPTHYILTPSIKSNLSNIARVLVSRKHPILLQGPTSSGKTSMVEYLAIRTGHRFIRINNHEHTDLQEYLGQYISDDKGKLVFQEGILVEAVRKGYWVVLDELNLAPSEVLEALNRLLDDNRELFIPETQEVVRPHPHFMLFATQNPPGLYGGRKVLSRAFRNRFLELHVDDIPEDELEEILCKRCALPPSYCKKLVLIMKELQLNRQGSNQVFAGKHGAITFRDLFRWAERQPSSYEELGIAGYQLLAERLRKDEEKLIIKQVIEKHLKIKLDIESIYSCDDKPEFLKLLQLLSENDSELSKSNHLEKIVWTRSMKRLFSLVGKCLEHKEPILLVGETGCSKTTICQLYSILNKQKLHILNCHQHTETADFIGGLRPVRGRDQVLSKLYSLVKQYFNQLSQLNLYKLEQENNNIDELPIKEIMERLIVESWKQVSNSSLLTEQLKQLAIEIDKTYSSYCSLFNWVDGPLVEAMKQGDYFLIDEISLAEDAVLERLNSVLEPSRLLVLAEKGGVEIEELRGHKEFRILATMNPGGDFGKKELSPAMRNRFTEIWVPAISSHQDLLQIIEERFTSPQLKGKGSLMLNFIEYLLMIQKNKRVISLRDILSWISFMNLCMDKQLLSPNESYIHGACLVLLDGFGMGSNSSSESEGLKLREACLIRLIDQIESQDEKLKLQTELLSTSSSSSSLSSSIANIIKEENRFGIHPFYIPVRESNVPKIQFSLSAPTTSKNAQRVLRGMQLPRAILVEGSPGVGKTSLITAIANASGNQIVRINLSEQTDIMDLLGSDLPVEGGTGGQFEWRDGVFLEALRNGSWVLLDELNLASQTVLEGLNSCLDHRSEVYIPELGKTFACHPNFRVFACQNPLHQGGGRKGLPKSFLNRFTQVFIDQLNQQDLLFISTAMYPTIPSKTIERMIEFNHQMFKESMIEHKFARKGAPWEFNLRDTFRWCDLIVKDPTSISNPARFIDLIYLQRMRTLQDREHVLTIFKRVFTTSGDENDQSIDMMPTICNYDKQPHYSISPEYLQIGSSILPRVQNGGASSFDSSVLDNSSNIQLLQRLLNPLENIMKCIEMNWMSILIGPTSTSKTSSIRLLAQLTGNTLYEFSMNSSVDTTEILGGFEQIDLVRYQKRIISSVSSLITIVSSHIMTYFNSNDDNLMKTCISSIQDIHQVWNLFKKQTQQTQQQIQQDGATIGSGGVGLITIEQLDLLSTIVDALEKLSIQFNLDNNQEHLNRIQDVRQQIQRIKSIEKESVTGCFEWIDGLLIKALETGAWILIDNVNFCNPTVLDRLNPLLEQDGVLMLNERGMVDGQVKVVKPHPNFRIFLTMDDKKGEISRAMRNRGIEIYMAADQLSLMETPSNNFDNQQLLTALGIPLESLTRTMIDFHNQIFTQLSSTIENPCTLSQLLYWGKLILDQLQRGFSLLNSIRNSMEQIYIRPRRHLTQRQLVTNIFNSIFNESAIKSILCEDQTVLGIYPHFIKGKDYVTDSISTTMKMNYQFFEYYLKRLMNSLSSSSSSSSQQQQQDESNYKISAKFLIENINSSQYENYVLYLNSLKDQNEKDSPINQLLTTLISCMKQLFNHTCYKDFEKRLEQLLSMINLSFIDSKQLLIYQGHQWKNNDSLFLLIKEKVDNYITKEAGGSESMIPIKDLFNQVLLNDMEIIKSLLSLFIQSSKQEKEYNKFLKQVQQGNASQQLSVKSIKSIPVILLSLAYTKKMMSKDLLPHQDIISMIYRLFKSLDEQIDQWLIQLSSSEQQQSTFSTIQIINQLILLKNNFWNSTFNLPSNQFNLGEFIIRWRWIYKEINKLTTLTSKSESPLLINTGLQVLIDKISSGLNQYNNDNSNNRLWKVGGYPMVMKSNHLVQLDSQFLSILEKVQYNFNKNESPIKHSSYAIDEDWKKTLIEAISTLYWANYQLNSDNQNQEQQQQELDRVSEFLTNLELVPQTLSDKLKQLIEKQKQFELNSTFNPVSTNFDNSDISNDSMISDATSIHFDPLSIKHQVISISPLIDHSLHLKETFVISELVKLLMLQHMDIENGKMNQSIITIFESIIDELKYIVNKYKSSTIPRSLYHLAFYQKLIWMIDNYLEKVTTNQEKDEQGQEQEQASIGIIELQSVIHSILYVYNSSQWNNAFNDISHVGKYSLPQYKYRLSKNDAAASLDNGSSKVNIYDSIRFGYGPPRLFQNIQTVFSFYLTCDWEYVSIADVPVKIEQLNQIIQHLTSADGSSNVSNIESFEYQIKQTIALLLSTITSFYKSFNNDEHKKHQLLSNVALIGEHLLSSSSSLEILDIGFDELIENIKELIIQSNDKSFNEKSKQLLLPCLDILLCLDDKVLYKDELKLQSTFGRLQLLLNTFRLIMFVPSGSIDPTQKYDVILQYSKEHSKQLQDEIEIRTIIEKQYTGKDGTSLVIDELVQKKQSIDQKLALDSKKITLRPIPSQFEELYRDVSQFSNHFSNIEKIIDLISKLDLSQVKNEFNLEVESEGGDNQQQQENNTSANSSYNQMILSTEQMWQEKANHFIQSCEKKFYSRYRDIIVPIITAVYQMKSGLRMMSVSFKQKVQDNKLGGNQGITKQIQKVLLSLTQFPRINSVDINSKITTTSTTTTATTTTNTTSNNILLDKLTLDSIKDMMKFNQRTNQDNCNGGLQNFKVIGLLLRSSLCQIYSQLSNSNYLDVDNLEAIDSIFRIFVQEWRFQEEEKRKKEELENQEFKYKVQTHKMETKEEKDEKVFLTSFPNFYKDFEDLEVANVVENQIDDDNDEENKDKENNESNVLTSEDGSMFFKSSINNEEILQLCSIHRDIFKHLDGIPIPKEQQQWTLSDRDRSELFQLFYSSSYLLMKILNQRSGDMEFDQLSLGSHILSASNLKETLSIRPPSLITYSKLDEKFRFLKTSSYLYKKSKGINDDDGDNQVVDVIHQKKTYNIYRDSNISEIGIIREPLISFRKRVFELLVEYPEQANLTLMVKLIDRLMTYPATDPLAKILTGLELLLRKSLEWESFASKAVSIQNHLNEISSLIVRWRKLEIESWPSIFQSQEKEAEVKALKSWFILYDLINDEPSSPELEDENLSKNFHTLQQYLYSSSLGDFLTRIELLKSFYKQLNSTIKLIGTSKNTNYKQKLSDIIYNIFKYFENFISRFEDRLAKSIKPIEDKALEFIRLSRWDDNRLLTQYERLKQHIEVSHRNLAKVTIKYKNVLAQPLHDIFTQIENELDIPPLVLHSGAATILEDKLKKNQKLNKKQIQKKSLAIENFNDWLSFSPSNYSIDRKSIDSISKPIEIESPLLKKLFQIENEKLAQNKLSLLSKRMIQICKENLLESDSWKVVRDGVDIINDLSIEIIDRLKELSSDEKIKRQEKEFALKELMSKFHEMGLSYHINRYPQEQLQISYLFNVRHLPTISDNQGYLPTSFSKITADNGAKLLDQADQYYYRIVSRVHRLRQLSIEYNSDLSSKHVQRINGYVEHFLSIIINQRNNLIDSINSWNHLTLFTELFTNISGSGGSNSEIDEQIFNNHNMLSKWFEIQRESINQFNQAIKEILLLCRKTTSAVSGGMISTIIPEICSIQIIIESIKSEIDKHQSKLRNLFSFLNNQYPMMTWSTINLIISIFTKFKEIKEKLNQLLLSKLSNINYIKSPIQILINNIDSLINKFNSEYEELVGNEINDNDIENQNNIKEFTNQFGILIDQILISIQDLKIQSNQIIAYNKEQEELDQELEKVREYTIEDGSISKLSEFIDHQVQSLRLSKLLEQFVKLHNIIVDGGGSVSTLSIYRQMIKQMGPLLAQFMLIVNQSIVDSLSYHKTCCKLEYISTGVFIQLYSKGFCKPADGGDDGEGGEGGRSNFEDDVEGTGMGEGKGKKDVSDQLEDQGQIEDTNTQKKEEKDEDEDEEKEEKDEDEGFDMQDDFEGEMHDIKKDENKDEDKKDDPNNEKENDKEMGDLEKPEDNVVDEKLWDEQDVQDEEEQDEEGKGDETNSEEMMAKQDGKDDNDDDKKDDDKKDDKKKKKEENGKPDENEEGEEGKDDEEEDGKDDNKNADDGASDEDDFGQEENEDDVINQEQEKEENHGDPRGDDQMEIPEDLELEDPDEGKEDDEQQDGGDDFKDPLDEMDGDDVSKEEEKKKELDGDEKEESDQDGDEEKEDEEKEDGDEDEDKEDKENQPIDPSNVDSINPEGDEPEKEQPEEDQTSLTTNEQQDETPKDSEQPLGVKDKTGSKSNVSNTDEEMKDESNQDNADDDSGMTQPTPSENDTGALKNLKSQPPPQSSAQQPPKKQKQVDPNPYRSMGDANKEWKKRLNLKQEQEEEEEEQSSEPKEKAPKQDPNAKENENQDYEFIKDDEKLDKDEETDQALAAATDTQLQDIPQNKAQDDQAEQEEDQMDIDEEDDMDVDHKQEVEHQDDSKQQLDENKKISMSKLKQDQLKQQKEKEKEKLEKDQQDGQDDELDGLNQKEQFTKEQLENLTNLDKEKAVLDDGDDQEMEQDGDQDDEESVEEKKLTREDLDRMRQELEQYKIENSSNPEIGTELWKKYEQLTNDLSQDLCEQLRLILEPTLATKLQGDYKSGKRINMKKVIPYIASQFKKDKIWLRRTKPNKRQYQVLLAIDDTESMAAYHSGGFALEAMTMISRAMSRLEVGQLGIVRFGEDVQLVHSFDQVFSDQTGPEIITQFKFQQTKTNMVNFLSKTLQIMDMNKQSSSGEPAMQLVFIVSDGWSLRDPETTKKYLREASIKNVFIVFIVIDNPVNNNSILDFESISFNNGKIQRTNYMSEFPFMYYVILRSLNNIPSILSDTLRQWFDLTKSTQ.

The tract at residues 250–270 (GSSVKSKKGGEQQQEGEGEDE) is disordered. AAA-ATPase protomer stretches follow at residues 278–583 (TNTV…LRKQ), 673–1012 (EKIS…ALNY), 1101–1346 (PIIP…IAGY), 1411–1721 (IVWT…MDKQ), 1840–2089 (RGMQ…HVLT), and 2167–2451 (LENI…EIYM). Residues 302–309 (GVTGSGKT) and 689–696 (GETGTGKT) contribute to the ATP site. A disordered region spans residues 796–826 (QTTTNNTKENNNNNNNNNNNNNNNNNNKKRT). Residues 797–821 (TTTNNTKENNNNNNNNNNNNNNNNN) show a composition bias toward low complexity. ATP contacts are provided by residues 1135 to 1142 (GPTSSGKT), 1438 to 1445 (GETGCSKT), 1852 to 1859 (GSPGVGKT), and 2184 to 2191 (GPTSTSKT). Residues 2562–4965 (ESAIKSILCE…EGKGKKDVSD (2404 aa)) are linker. The tract at residues 4932–5598 (GDDGEGGEGG…SVEEKKLTRE (667 aa)) is disordered. Acidic residues predominate over residues 4984 to 5008 (KDEDEDEEKEEKDEDEGFDMQDDFE). Over residues 5009–5055 (GEMHDIKKDENKDEDKKDDPNNEKENDKEMGDLEKPEDNVVDEKLWD) the composition is skewed to basic and acidic residues. The segment covering 5056 to 5076 (EQDVQDEEEQDEEGKGDETNS) has biased composition (acidic residues). The segment covering 5079 to 5113 (MMAKQDGKDDNDDDKKDDDKKDDKKKKKEENGKPD) has biased composition (basic and acidic residues). Composition is skewed to acidic residues over residues 5114–5130 (ENEE…EDGK) and 5139–5156 (GASD…DDVI). Positions 5159-5173 (EQEKEENHGDPRGDD) are enriched in basic and acidic residues. A compositionally biased stretch (acidic residues) spans 5174–5199 (QMEIPEDLELEDPDEGKEDDEQQDGG). The segment covering 5213 to 5224 (DVSKEEEKKKEL) has biased composition (basic and acidic residues). Acidic residues-rich tracts occupy residues 5225-5255 (DGDE…EDKE) and 5273-5286 (EGDE…EEDQ). The span at 5297–5313 (ETPKDSEQPLGVKDKTG) shows a compositional bias: basic and acidic residues. Polar residues predominate over residues 5339–5349 (GMTQPTPSEND). A compositionally biased stretch (basic and acidic residues) spans 5410-5442 (SEPKEKAPKQDPNAKENENQDYEFIKDDEKLDK). Residues 5448 to 5460 (QALAAATDTQLQD) show a composition bias toward low complexity. Over residues 5469 to 5487 (DQAEQEEDQMDIDEEDDMD) the composition is skewed to acidic residues. Basic and acidic residues-rich tracts occupy residues 5488–5536 (VDHK…KDQQ) and 5551–5570 (QFTK…KAVL). The segment covering 5571 to 5590 (DDGDDQEMEQDGDQDDEESV) has biased composition (acidic residues). One can recognise a VWFA domain in the interval 5696-5889 (QVLLAIDDTE…NIPSILSDTL (194 aa)).

The protein belongs to the midasin family. Associates with pre-60S ribosomes in the nucleoplasm.

It localises to the nucleus. The protein localises to the nucleolus. The protein resides in the nucleoplasm. Functionally, nuclear chaperone required for maturation and nuclear export of pre-60S ribosome subunits. Functions at successive maturation steps to remove ribosomal factors at critical transition points, first driving the exit of early pre-60S particles from the nucleolus and then driving late pre-60S particles from the nucleus. The protein is Midasin (mdn1) of Dictyostelium discoideum (Social amoeba).